Here is a 359-residue protein sequence, read N- to C-terminus: F-box protein At1g10895 (359 aa).

In terms of domain architecture, F-box spans 2–48 (TTMSDLDEIMVAEILCRTPMTCLKTVRSVCKKWNALSKKWFFFGKAK).

The polypeptide is F-box protein At1g10895 (Arabidopsis thaliana (Mouse-ear cress)).